We begin with the raw amino-acid sequence, 79 residues long: Acyl carrier protein (79 aa).

Positions 2–77 (STIEERVKKI…QAIDYVKAHV (76 aa)) constitute a Carrier domain. Position 37 is an O-(pantetheine 4'-phosphoryl)serine (S37).

Belongs to the acyl carrier protein (ACP) family. 4'-phosphopantetheine is transferred from CoA to a specific serine of apo-ACP by AcpS. This modification is essential for activity because fatty acids are bound in thioester linkage to the sulfhydryl of the prosthetic group.

It localises to the cytoplasm. It functions in the pathway lipid metabolism; fatty acid biosynthesis. Functionally, carrier of the growing fatty acid chain in fatty acid biosynthesis. The sequence is that of Acyl carrier protein from Xanthomonas axonopodis pv. citri (strain 306).